The chain runs to 565 residues: CTP synthase (565 aa).

The tract at residues 1–268 is amidoligase domain; it reads MQTKYIFVTG…GELVVDRFYP (268 aa). Serine 14 contacts CTP. Serine 14 is a binding site for UTP. Residue 15 to 20 participates in ATP binding; that stretch reads SLGKGI. Position 55 (tyrosine 55) interacts with L-glutamine. An ATP-binding site is contributed by aspartate 72. Mg(2+)-binding residues include aspartate 72 and glutamate 142. Residues 149-151, 189-194, and lysine 225 each bind CTP; these read DIE and KTKPTQ. Residues 189 to 194 and lysine 225 contribute to the UTP site; that span reads KTKPTQ. In terms of domain architecture, Glutamine amidotransferase type-1 spans 301 to 543; sequence PIALVGKYVE…VRACTAYAHE (243 aa). Glycine 363 is a binding site for L-glutamine. Catalysis depends on cysteine 390, which acts as the Nucleophile; for glutamine hydrolysis. L-glutamine is bound by residues 391–394, glutamate 414, and arginine 471; that span reads LGLQ. Active-site residues include histidine 516 and glutamate 518. The interval 545-565 is disordered; the sequence is DLVTSPQPPERKAVPLASVDM.

It belongs to the CTP synthase family. Homotetramer.

It carries out the reaction UTP + L-glutamine + ATP + H2O = CTP + L-glutamate + ADP + phosphate + 2 H(+). The catalysed reaction is L-glutamine + H2O = L-glutamate + NH4(+). It catalyses the reaction UTP + NH4(+) + ATP = CTP + ADP + phosphate + 2 H(+). Its pathway is pyrimidine metabolism; CTP biosynthesis via de novo pathway; CTP from UDP: step 2/2. Its activity is regulated as follows. Allosterically activated by GTP, when glutamine is the substrate; GTP has no effect on the reaction when ammonia is the substrate. The allosteric effector GTP functions by stabilizing the protein conformation that binds the tetrahedral intermediate(s) formed during glutamine hydrolysis. Inhibited by the product CTP, via allosteric rather than competitive inhibition. In terms of biological role, catalyzes the ATP-dependent amination of UTP to CTP with either L-glutamine or ammonia as the source of nitrogen. Regulates intracellular CTP levels through interactions with the four ribonucleotide triphosphates. This is CTP synthase from Salinibacter ruber (strain DSM 13855 / M31).